A 24-amino-acid chain; its full sequence is U1-plectoxin-Pt1e (24 aa).

Cys4 and Cys18 are disulfide-bonded.

This sequence belongs to the neurotoxin 02 (plectoxin) family. 02 (plectoxin) subfamily. Post-translationally, contains 5 disulfide bonds. Expressed by the venom gland.

The protein resides in the secreted. In terms of biological role, potent toxin that may paralyze and/or kill insect pests such as H.virescens (lepidoptera), S.exigua (beet armyworm) and M.sexta (tobacco hornworm). The sequence is that of U1-plectoxin-Pt1e from Plectreurys tristis (Spider).